The chain runs to 84 residues: Beta/gamma-crystallin (84 aa).

Beta/gamma crystallin 'Greek key' domains follow at residues 2 to 42 and 43 to 84; these read GKII…IVES and GTWF…VKQQ. Positions 64 to 84 are disordered; the sequence is KYPNPGSWGGNDDELSSVKQQ.

Belongs to the beta/gamma-crystallin family. In terms of assembly, monomer. As to expression, palps of larvae and otolith of the light-sensing ocellus.

Its function is as follows. Structural component of the neuroectodermal visual system. The polypeptide is Beta/gamma-crystallin (Ciona intestinalis (Transparent sea squirt)).